Reading from the N-terminus, the 957-residue chain is PE-PGRS family protein PE_PGRS3 (957 aa).

One can recognise a PE domain in the interval 4 to 94 (VIAAPEVIAA…GAYAAAEAAA (91 aa)). A compositionally biased stretch (basic residues) spans 893–925 (CRRQRRADRQRRQRRQRRQSRGHARCRRHRRAA). Residues 893-957 (CRRQRRADRQ…GISCSPQMMP (65 aa)) are disordered.

Belongs to the mycobacterial PE family. PGRS subfamily. In terms of processing, a cleavage of the protein removes the N-terminal 120-150 residues, immediately upstream the PGRS domain. The exact position of the cleavage site could not be identified.

It is found in the cell outer membrane. It localises to the secreted. The protein localises to the cell wall. The protein resides in the cell surface. Its function is as follows. The arginine-rich C-terminal region protrudes from the mycobacterial membrane and mediates M.tuberculosis entry into host epithelial cells. May serve as a bridge between mycobacteria and host cells by interacting with specific host phospholipids and extracting them from host cells, for their direct integration or as a source of phosphate, during phases of TB pathogenesis when M.tuberculosis is short of phosphate supply. This Mycobacterium tuberculosis (strain ATCC 25618 / H37Rv) protein is PE-PGRS family protein PE_PGRS3.